Consider the following 297-residue polypeptide: MLCYVNYKRVKRPVEIPNLEVEIGFGRGDFIVKLAKENPDKNFFGIEISQISIEKLMKRVGKKGLKNVYCTNVDAYWGFYFLFRDNYVENIYMNYPDPWFKKRHHKRRLTKPERLYMFAKKLKLGGEIRIRTDNYEFLEFTKESAKVLDCFEVEEGTLNVKEPLTKYEQKWLSMGKTLYKLILRKVKEPKFVEHPEVEEVRELFPVKVKVESVDPKKIESREIKLDEEVYFKTFKVWQRDKDFLVECLLSEKGYLQKFFIQIKRKEDGYVIDVSPYSEVLRTRNLQRSIQTVAQLLS.

Positions 22, 47, 74, and 97 each coordinate S-adenosyl-L-methionine. Residue Asp-97 is part of the active site. Substrate is bound by residues Lys-101, Asp-133, and 165–168; that span reads TKYE.

This sequence belongs to the class I-like SAM-binding methyltransferase superfamily. TrmB family.

It carries out the reaction guanosine(46) in tRNA + S-adenosyl-L-methionine = N(7)-methylguanosine(46) in tRNA + S-adenosyl-L-homocysteine. It participates in tRNA modification; N(7)-methylguanine-tRNA biosynthesis. Functionally, catalyzes the formation of N(7)-methylguanine at position 46 (m7G46) in tRNA. In Aquifex aeolicus (strain VF5), this protein is tRNA (guanine-N(7)-)-methyltransferase.